The primary structure comprises 666 residues: Calcium/calmodulin-dependent protein kinase type II subunit beta (666 aa).

In terms of domain architecture, Protein kinase spans Y14–V272. Y17 carries the phosphotyrosine modification. ATP-binding positions include I20–V28 and K43. The active-site Proton acceptor is D136. The segment at H283–K292 is autoinhibitory domain. T287 carries the post-translational modification Phosphothreonine; by autocatalysis. The calmodulin-binding stretch occupies residues L291–K301. Phosphothreonine; by autocatalysis occurs at positions 306 and 307. Residues A349–R534 are disordered. Residues P354–K369 show a composition bias toward polar residues. Phosphoserine occurs at positions 367, 394, and 397. 2 positions are modified to phosphothreonine: T400 and T401. Pro residues predominate over residues L432–S447. A compositionally biased stretch (low complexity) spans S479–P491. The segment covering P514–T531 has biased composition (pro residues).

It belongs to the protein kinase superfamily. CAMK Ser/Thr protein kinase family. CaMK subfamily. In terms of assembly, CAMK2 is composed of 4 different chains: alpha (CAMK2A), beta (CAMK2B), gamma (CAMK2G), and delta (CAMK2D). The different isoforms assemble into homo- or heteromultimeric holoenzymes composed of 12 subunits with two hexameric rings stacked one on top of the other. Interacts with SYNGAP1 and CAMK2N2. Interacts with MPDZ. Interacts with FOXO3. Interacts (when in a kinase inactive state not associated with calmodulin) with ARC; leading to target ARC to inactive synapses. Interacts with CAMK2N1; this interaction requires CAMK2B activation by Ca(2+). Post-translationally, autophosphorylation of Thr-287 following activation by Ca(2+)/calmodulin. Phosphorylation of Thr-287 locks the kinase into an activated state. As to expression, widely expressed. Expressed in adult and fetal brain. Expression is slightly lower in fetal brain. Expressed in skeletal muscle.

The protein localises to the cytoplasm. It localises to the cytoskeleton. The protein resides in the microtubule organizing center. It is found in the centrosome. Its subcellular location is the sarcoplasmic reticulum membrane. The protein localises to the synapse. The enzyme catalyses L-seryl-[protein] + ATP = O-phospho-L-seryl-[protein] + ADP + H(+). It catalyses the reaction L-threonyl-[protein] + ATP = O-phospho-L-threonyl-[protein] + ADP + H(+). With respect to regulation, activated by Ca(2+)/calmodulin. Binding of calmodulin results in conformational change that relieves intrasteric autoinhibition and allows autophosphorylation of Thr-287 which turns the kinase in a constitutively active form and confers to the kinase a Ca(2+)-independent activity. Calcium/calmodulin-dependent protein kinase that functions autonomously after Ca(2+)/calmodulin-binding and autophosphorylation, and is involved in dendritic spine and synapse formation, neuronal plasticity and regulation of sarcoplasmic reticulum Ca(2+) transport in skeletal muscle. In neurons, plays an essential structural role in the reorganization of the actin cytoskeleton during plasticity by binding and bundling actin filaments in a kinase-independent manner. This structural function is required for correct targeting of CaMK2A, which acts downstream of NMDAR to promote dendritic spine and synapse formation and maintain synaptic plasticity which enables long-term potentiation (LTP) and hippocampus-dependent learning. In developing hippocampal neurons, promotes arborization of the dendritic tree and in mature neurons, promotes dendritic remodeling. Also regulates the migration of developing neurons. Participates in the modulation of skeletal muscle function in response to exercise. In slow-twitch muscles, is involved in regulation of sarcoplasmic reticulum (SR) Ca(2+) transport and in fast-twitch muscle participates in the control of Ca(2+) release from the SR through phosphorylation of triadin, a ryanodine receptor-coupling factor, and phospholamban (PLN/PLB), an endogenous inhibitor of SERCA2A/ATP2A2. In response to interferon-gamma (IFN-gamma) stimulation, catalyzes phosphorylation of STAT1, stimulating the JAK-STAT signaling pathway. Phosphorylates reticulophagy regulator RETREG1 at 'Ser-151' under endoplasmic reticulum stress conditions which enhances RETREG1 oligomerization and its membrane scission and reticulophagy activity. In Homo sapiens (Human), this protein is Calcium/calmodulin-dependent protein kinase type II subunit beta (CAMK2B).